Here is a 315-residue protein sequence, read N- to C-terminus: S-methyl-5'-thioadenosine phosphorylase (315 aa).

Phosphate contacts are provided by residues serine 22, 65–66 (RH), and 98–99 (SA). Methionine 205 is a binding site for substrate. Serine 206 contributes to the phosphate binding site. Residue 229–231 (DYD) coordinates substrate.

The protein belongs to the PNP/MTAP phosphorylase family. MTAP subfamily. In terms of assembly, homotrimer.

The protein localises to the cytoplasm. Its subcellular location is the nucleus. The catalysed reaction is S-methyl-5'-thioadenosine + phosphate = 5-(methylsulfanyl)-alpha-D-ribose 1-phosphate + adenine. Its pathway is amino-acid biosynthesis; L-methionine biosynthesis via salvage pathway; S-methyl-5-thio-alpha-D-ribose 1-phosphate from S-methyl-5'-thioadenosine (phosphorylase route): step 1/1. Its function is as follows. Catalyzes the reversible phosphorylation of S-methyl-5'-thioadenosine (MTA) to adenine and 5-methylthioribose-1-phosphate. Involved in the breakdown of MTA, a major by-product of polyamine biosynthesis. Responsible for the first step in the methionine salvage pathway after MTA has been generated from S-adenosylmethionine. Has broad substrate specificity with 6-aminopurine nucleosides as preferred substrates. The chain is S-methyl-5'-thioadenosine phosphorylase from Mycosarcoma maydis (Corn smut fungus).